We begin with the raw amino-acid sequence, 144 residues long: uncharacterized protein (144 aa).

A compositionally biased stretch (polar residues) spans 125–135 (PQQQNNHQLQS). Residues 125-144 (PQQQNNHQLQSKPKAASISR) are disordered.

This is an uncharacterized protein from Rickettsia prowazekii (strain Madrid E).